We begin with the raw amino-acid sequence, 215 residues long: Peroxiredoxin 1 (215 aa).

Positions 2–157 (KLLGEKFPSM…ILRALKALQT (156 aa)) constitute a Thioredoxin domain. Catalysis depends on Cys44, which acts as the Cysteine sulfenic acid (-SOH) intermediate. Arg120 provides a ligand contact to substrate.

The protein belongs to the peroxiredoxin family. Prx6 subfamily. As to quaternary structure, homodecamer. Pentamer of dimers that assemble into a ring structure.

It localises to the cytoplasm. It catalyses the reaction a hydroperoxide + [thioredoxin]-dithiol = an alcohol + [thioredoxin]-disulfide + H2O. In terms of biological role, thiol-specific peroxidase that catalyzes the reduction of hydrogen peroxide and organic hydroperoxides to water and alcohols, respectively. Plays a role in cell protection against oxidative stress by detoxifying peroxides. The chain is Peroxiredoxin 1 from Caldanaerobacter subterraneus subsp. tengcongensis (strain DSM 15242 / JCM 11007 / NBRC 100824 / MB4) (Thermoanaerobacter tengcongensis).